We begin with the raw amino-acid sequence, 203 residues long: Probable nicotinate-nucleotide adenylyltransferase (203 aa).

Belongs to the NadD family.

The catalysed reaction is nicotinate beta-D-ribonucleotide + ATP + H(+) = deamido-NAD(+) + diphosphate. Its pathway is cofactor biosynthesis; NAD(+) biosynthesis; deamido-NAD(+) from nicotinate D-ribonucleotide: step 1/1. Functionally, catalyzes the reversible adenylation of nicotinate mononucleotide (NaMN) to nicotinic acid adenine dinucleotide (NaAD). This is Probable nicotinate-nucleotide adenylyltransferase from Dictyoglomus turgidum (strain DSM 6724 / Z-1310).